The chain runs to 412 residues: uncharacterized protein (412 aa).

The first 21 residues, Met1–Ser21, serve as a signal peptide directing secretion. Disordered regions lie at residues Gln85–Thr134, Ser250–Thr294, and Val327–Glu357. Residues Ala88–Pro105 show a composition bias toward low complexity. The segment covering Thr124–Thr134 has biased composition (polar residues). 2 stretches are compositionally biased toward low complexity: residues Ser250–Ser259 and Thr266–Gly293. Positions Gly330–Glu347 are enriched in acidic residues. Over residues Thr348–Glu357 the composition is skewed to basic and acidic residues. The ShKT domain maps to Cys371–Cys408.

This is an uncharacterized protein from Caenorhabditis elegans.